The following is a 462-amino-acid chain: Putative F-box protein At1g12855 (462 aa).

Residues 1 to 22 (MESREDSFISKEKKSTMKKEKQ) are compositionally biased toward basic and acidic residues. The interval 1 to 59 (MESREDSFISKEKKSTMKKEKQAIASQRNRRRVIKNRGNGKRLIASLSQRKRRRIPRGR) is disordered. Over residues 28 to 40 (RNRRRVIKNRGNG) the composition is skewed to basic residues. The F-box domain occupies 65–110 (VFAPSSLPNDVVEEIFLRLPVKAIIQLKSLSKQWRSTIESRSFEER).

This Arabidopsis thaliana (Mouse-ear cress) protein is Putative F-box protein At1g12855.